An 840-amino-acid chain; its full sequence is Protein translocase subunit SecA (840 aa).

Residues Gln87, 105-109 (GEGKT), and Asp494 each bind ATP. The interval 791-840 (LRKEQEDQPMFFGPAEGAGQKPQTRKDRKVGRNDPCPCGSGKKYKKCCGK) is disordered. Positions 826, 828, 837, and 838 each coordinate Zn(2+).

It belongs to the SecA family. Monomer and homodimer. Part of the essential Sec protein translocation apparatus which comprises SecA, SecYEG and auxiliary proteins SecDF-YajC and YidC. Requires Zn(2+) as cofactor.

Its subcellular location is the cell inner membrane. It is found in the cytoplasm. The catalysed reaction is ATP + H2O + cellular proteinSide 1 = ADP + phosphate + cellular proteinSide 2.. Its function is as follows. Part of the Sec protein translocase complex. Interacts with the SecYEG preprotein conducting channel. Has a central role in coupling the hydrolysis of ATP to the transfer of proteins into and across the cell membrane, serving as an ATP-driven molecular motor driving the stepwise translocation of polypeptide chains across the membrane. This is Protein translocase subunit SecA from Syntrophobacter fumaroxidans (strain DSM 10017 / MPOB).